We begin with the raw amino-acid sequence, 71 residues long: Protein PSY2 (71 aa).

The signal sequence occupies residues 1–20; the sequence is MSFGTRLLLFLILTLPLVTS. Residues 21–46 constitute a propeptide that is removed on maturation; the sequence is SSPNTLHVSGIVKTGTTSRFLMMTIE. A Sulfotyrosine modification is found at Tyr-48. Residues 50–71 are disordered; the sequence is DPSANTRHDPSVPTNAKADTTP. Residues 61–71 are compositionally biased toward polar residues; that stretch reads VPTNAKADTTP. The residue at position 62 (Pro-62) is a 4-hydroxyproline. O-linked (Ara...) hydroxyproline glycosylation is present at Pro-62. Residues 65–71 constitute a propeptide that is removed on maturation; sequence AKADTTP.

This sequence belongs to the sulfated-peptide plant hormone family. Post-translationally, the sulfation and the glycosylation are required for full activity.

It localises to the secreted. In terms of biological role, promotes cellular proliferation and expansion. The chain is Protein PSY2 (PSY2) from Arabidopsis thaliana (Mouse-ear cress).